Here is a 440-residue protein sequence, read N- to C-terminus: Light-independent protochlorophyllide reductase subunit N (440 aa).

Residues Cys-15, Cys-40, and Cys-99 each contribute to the [4Fe-4S] cluster site.

Belongs to the BchN/ChlN family. As to quaternary structure, protochlorophyllide reductase is composed of three subunits; BchL, BchN and BchB. Forms a heterotetramer of two BchB and two BchN subunits. [4Fe-4S] cluster serves as cofactor.

The enzyme catalyses chlorophyllide a + oxidized 2[4Fe-4S]-[ferredoxin] + 2 ADP + 2 phosphate = protochlorophyllide a + reduced 2[4Fe-4S]-[ferredoxin] + 2 ATP + 2 H2O. The protein operates within porphyrin-containing compound metabolism; bacteriochlorophyll biosynthesis (light-independent). Component of the dark-operative protochlorophyllide reductase (DPOR) that uses Mg-ATP and reduced ferredoxin to reduce ring D of protochlorophyllide (Pchlide) to form chlorophyllide a (Chlide). This reaction is light-independent. The NB-protein (BchN-BchB) is the catalytic component of the complex. This Heliobacterium mobile (Heliobacillus mobilis) protein is Light-independent protochlorophyllide reductase subunit N.